A 318-amino-acid chain; its full sequence is Lipoyl synthase 1 (318 aa).

Residues 6-32 (DTISNPLRPRHPEKVNRPDSASPPKPD) form a disordered region. Positions 60, 65, 71, 86, 90, 93, and 299 each coordinate [4Fe-4S] cluster. The region spanning 72–288 (WDKKHATFMI…EKVAYTKGFL (217 aa)) is the Radical SAM core domain.

Belongs to the radical SAM superfamily. Lipoyl synthase family. [4Fe-4S] cluster serves as cofactor.

Its subcellular location is the cytoplasm. It carries out the reaction [[Fe-S] cluster scaffold protein carrying a second [4Fe-4S](2+) cluster] + N(6)-octanoyl-L-lysyl-[protein] + 2 oxidized [2Fe-2S]-[ferredoxin] + 2 S-adenosyl-L-methionine + 4 H(+) = [[Fe-S] cluster scaffold protein] + N(6)-[(R)-dihydrolipoyl]-L-lysyl-[protein] + 4 Fe(3+) + 2 hydrogen sulfide + 2 5'-deoxyadenosine + 2 L-methionine + 2 reduced [2Fe-2S]-[ferredoxin]. It functions in the pathway protein modification; protein lipoylation via endogenous pathway; protein N(6)-(lipoyl)lysine from octanoyl-[acyl-carrier-protein]: step 2/2. Catalyzes the radical-mediated insertion of two sulfur atoms into the C-6 and C-8 positions of the octanoyl moiety bound to the lipoyl domains of lipoate-dependent enzymes, thereby converting the octanoylated domains into lipoylated derivatives. This is Lipoyl synthase 1 from Bradyrhizobium diazoefficiens (strain JCM 10833 / BCRC 13528 / IAM 13628 / NBRC 14792 / USDA 110).